A 358-amino-acid polypeptide reads, in one-letter code: Peptide chain release factor 1 (358 aa).

An N5-methylglutamine modification is found at Q235.

Belongs to the prokaryotic/mitochondrial release factor family. In terms of processing, methylated by PrmC. Methylation increases the termination efficiency of RF1.

It is found in the cytoplasm. Functionally, peptide chain release factor 1 directs the termination of translation in response to the peptide chain termination codons UAG and UAA. This is Peptide chain release factor 1 from Nitrosospira multiformis (strain ATCC 25196 / NCIMB 11849 / C 71).